Here is a 128-residue protein sequence, read N- to C-terminus: Glycine cleavage system H protein (128 aa).

A Lipoyl-binding domain is found at 24-105 (SLTIGVTDHA…AYAAWLFKLK (82 aa)). The residue at position 65 (lysine 65) is an N6-lipoyllysine.

This sequence belongs to the GcvH family. As to quaternary structure, the glycine cleavage system is composed of four proteins: P, T, L and H. It depends on (R)-lipoate as a cofactor.

In terms of biological role, the glycine cleavage system catalyzes the degradation of glycine. The H protein shuttles the methylamine group of glycine from the P protein to the T protein. This chain is Glycine cleavage system H protein, found in Aromatoleum aromaticum (strain DSM 19018 / LMG 30748 / EbN1) (Azoarcus sp. (strain EbN1)).